The sequence spans 255 residues: tRNA uridine(34) hydroxylase (255 aa).

One can recognise a Rhodanese domain in the interval 125–219 (ATPDTILLDV…YLEQIPESES (95 aa)). Cys179 acts as the Cysteine persulfide intermediate in catalysis.

It belongs to the TrhO family.

It carries out the reaction uridine(34) in tRNA + AH2 + O2 = 5-hydroxyuridine(34) in tRNA + A + H2O. In terms of biological role, catalyzes oxygen-dependent 5-hydroxyuridine (ho5U) modification at position 34 in tRNAs. The polypeptide is tRNA uridine(34) hydroxylase (Nitrobacter winogradskyi (strain ATCC 25391 / DSM 10237 / CIP 104748 / NCIMB 11846 / Nb-255)).